A 372-amino-acid polypeptide reads, in one-letter code: 4-hydroxy-3-methylbut-2-en-1-yl diphosphate synthase (flavodoxin) (372 aa).

Positions 270, 273, 305, and 312 each coordinate [4Fe-4S] cluster.

Belongs to the IspG family. [4Fe-4S] cluster is required as a cofactor.

It carries out the reaction (2E)-4-hydroxy-3-methylbut-2-enyl diphosphate + oxidized [flavodoxin] + H2O + 2 H(+) = 2-C-methyl-D-erythritol 2,4-cyclic diphosphate + reduced [flavodoxin]. Its pathway is isoprenoid biosynthesis; isopentenyl diphosphate biosynthesis via DXP pathway; isopentenyl diphosphate from 1-deoxy-D-xylulose 5-phosphate: step 5/6. Its function is as follows. Converts 2C-methyl-D-erythritol 2,4-cyclodiphosphate (ME-2,4cPP) into 1-hydroxy-2-methyl-2-(E)-butenyl 4-diphosphate. This chain is 4-hydroxy-3-methylbut-2-en-1-yl diphosphate synthase (flavodoxin), found in Salmonella schwarzengrund (strain CVM19633).